Consider the following 249-residue polypeptide: MSVFAGRYAGRCAIVTGGASGLGKQVAARIIAEGGAVALWDLNGDALAATQAEIDATHVVALDVSDHAAVAAAAKDSAAALGKVDILICSAGITGATVPVWEFPVDSFQRVIDINLNGLFYCNREVVPFMLENGYGRIVNLASVAGKEGNPNASAYSASKAGVIGFTKSLGKELAGKGVIANALTPATFESPILDQLPQSQVDYMRSKIPMGRLGLVEESAAMVCFMASEECSFTTASTFDTSGGRTTF.

Catalysis depends on Tyr156, which acts as the Proton acceptor.

Belongs to the short-chain dehydrogenases/reductases (SDR) family. Homotetramer.

The enzyme catalyses 2-dehydro-3-deoxy-L-rhamnonate + NAD(+) = 2,4-didehydro-3-deoxy-L-rhamnonate + NADH + H(+). The protein operates within carbohydrate degradation; L-rhamnose degradation. In terms of biological role, catalyzes the NAD(+)-dependent dehydrogenation of 2-dehydro-3-deoxy-L-rhamnonate to form 2,4-didehydro-3-deoxy-L-rhamnonate. Does not show any detectable activity in the presence of NADP(+). Catalyzes the fourth step in an alternative pathway for rhamnose utilization that does not involve phosphorylated intermediates. In Sphingomonas sp. (strain SKA58), this protein is 2-dehydro-3-deoxy-L-rhamnonate dehydrogenase (NAD(+)).